Reading from the N-terminus, the 778-residue chain is Double zinc ribbon and ankyrin repeat-containing protein 1 (778 aa).

2 positions are modified to phosphoserine: Ser179 and Ser201. DZANK-type zinc fingers lie at residues 230-289 (CAHC…CVVC) and 359-407 (CSRC…GSCG). 2 ANK repeats span residues 631–662 (ENKL…DPNC) and 666–695 (QGRP…DIDQ). Position 768 is a phosphoserine (Ser768).

As to quaternary structure, interacts with NINL. Associates with DYNC1H1 and multiple dynein intermediate and light chains as well as actin-binding proteins.

The protein resides in the cytoplasm. It localises to the cytoskeleton. Its subcellular location is the microtubule organizing center. The protein localises to the centrosome. It is found in the cilium basal body. Its function is as follows. Involved in vesicle transport in photoreceptor cells. This is Double zinc ribbon and ankyrin repeat-containing protein 1 (Dzank1) from Mus musculus (Mouse).